The sequence spans 82 residues: Putative membrane protein insertion efficiency factor (82 aa).

Residues 61-82 (HEGGYDPVPKRKNKNSEGKREE) are disordered.

Belongs to the UPF0161 family.

It localises to the cell inner membrane. Could be involved in insertion of integral membrane proteins into the membrane. The chain is Putative membrane protein insertion efficiency factor from Fusobacterium nucleatum subsp. nucleatum (strain ATCC 25586 / DSM 15643 / BCRC 10681 / CIP 101130 / JCM 8532 / KCTC 2640 / LMG 13131 / VPI 4355).